Here is a 269-residue protein sequence, read N- to C-terminus: uncharacterized protein (269 aa).

4 helical membrane-spanning segments follow: residues 64–84 (FVYF…LAGV), 125–145 (YGIA…FLSF), 169–189 (FFIS…FLVL), and 230–250 (VFAT…IAIF).

The protein localises to the cell membrane. This is an uncharacterized protein from Mycoplasma genitalium (strain ATCC 33530 / DSM 19775 / NCTC 10195 / G37) (Mycoplasmoides genitalium).